We begin with the raw amino-acid sequence, 149 residues long: Large ribosomal subunit protein uL11 (149 aa).

This sequence belongs to the universal ribosomal protein uL11 family. As to quaternary structure, part of the ribosomal stalk of the 50S ribosomal subunit. Interacts with L10 and the large rRNA to form the base of the stalk. L10 forms an elongated spine to which L12 dimers bind in a sequential fashion forming a multimeric L10(L12)X complex. Post-translationally, one or more lysine residues are methylated.

Its function is as follows. Forms part of the ribosomal stalk which helps the ribosome interact with GTP-bound translation factors. The protein is Large ribosomal subunit protein uL11 of Methylobacterium sp. (strain 4-46).